The following is a 245-amino-acid chain: Probable phosphatase Teth514_1060 (245 aa).

Positions 8, 10, 16, 41, 74, 102, 133, 194, and 196 each coordinate Zn(2+).

The protein belongs to the PHP family. Requires Zn(2+) as cofactor.

This chain is Probable phosphatase Teth514_1060, found in Thermoanaerobacter sp. (strain X514).